Reading from the N-terminus, the 233-residue chain is Homeobox protein Hox-D4a (233 aa).

An Antp-type hexapeptide motif is present at residues 124 to 129 (VYPWMK). The homeobox DNA-binding region spans 145–204 (PKRSRTAYTRQQVLELEKEFHFNRYLTRRRRIEIAHTLCLSERQIKIWFQNRRMKWTKDH). Residues 203-233 (DHKLPNTKGRSAPASSHLQSIHKDQTDITSL) form a disordered region. A compositionally biased stretch (basic and acidic residues) spans 223-233 (IHKDQTDITSL).

The protein belongs to the Antp homeobox family. Deformed subfamily.

The protein localises to the nucleus. Sequence-specific transcription factor which is part of a developmental regulatory system that provides cells with specific positional identities on the anterior-posterior axis. The chain is Homeobox protein Hox-D4a (hoxd4a) from Takifugu rubripes (Japanese pufferfish).